The following is a 370-amino-acid chain: DNA replication and repair protein RecF (370 aa).

An ATP-binding site is contributed by 30–37 (GENAQGKT).

The protein belongs to the RecF family.

Its subcellular location is the cytoplasm. In terms of biological role, the RecF protein is involved in DNA metabolism; it is required for DNA replication and normal SOS inducibility. RecF binds preferentially to single-stranded, linear DNA. It also seems to bind ATP. This chain is DNA replication and repair protein RecF, found in Staphylococcus aureus (strain USA300).